The primary structure comprises 148 residues: Lysozyme C, non-stomach isozyme (148 aa).

The N-terminal stretch at 1–18 (MKALLILGLLLFSVAVQG) is a signal peptide. A C-type lysozyme domain is found at 19-148 (KVFERCELAR…LTSYIQGCGV (130 aa)). Cystine bridges form between Cys-24/Cys-146, Cys-48/Cys-134, Cys-83/Cys-99, and Cys-95/Cys-113. Active-site residues include Glu-53 and Asp-71.

Belongs to the glycosyl hydrolase 22 family. Expressed in blood cells.

The enzyme catalyses Hydrolysis of (1-&gt;4)-beta-linkages between N-acetylmuramic acid and N-acetyl-D-glucosamine residues in a peptidoglycan and between N-acetyl-D-glucosamine residues in chitodextrins.. Lysozymes have primarily a bacteriolytic function; those in tissues and body fluids are associated with the monocyte-macrophage system and enhance the activity of immunoagents. The polypeptide is Lysozyme C, non-stomach isozyme (LYS) (Bos taurus (Bovine)).